Reading from the N-terminus, the 130-residue chain is Anti-adapter protein IraD (130 aa).

This sequence belongs to the GpW/Gp25 family. IraD subfamily. In terms of assembly, interacts with RssB.

It localises to the cytoplasm. Inhibits RpoS proteolysis by regulating RssB activity, thereby increasing the stability of the sigma stress factor RpoS during oxidative stress. Its effect on RpoS stability is due to its interaction with RssB, which probably blocks the interaction of RssB with RpoS, and the consequent delivery of the RssB-RpoS complex to the ClpXP protein degradation pathway. The chain is Anti-adapter protein IraD from Escherichia coli (strain K12 / MC4100 / BW2952).